A 504-amino-acid chain; its full sequence is ATP synthase subunit alpha 2 (504 aa).

169–176 (GDRQTGKT) is an ATP binding site.

This sequence belongs to the ATPase alpha/beta chains family. As to quaternary structure, F-type ATPases have 2 components, CF(1) - the catalytic core - and CF(0) - the membrane proton channel. CF(1) has five subunits: alpha(3), beta(3), gamma(1), delta(1), epsilon(1). CF(0) has three main subunits: a(1), b(2) and c(9-12). The alpha and beta chains form an alternating ring which encloses part of the gamma chain. CF(1) is attached to CF(0) by a central stalk formed by the gamma and epsilon chains, while a peripheral stalk is formed by the delta and b chains.

The protein localises to the cell membrane. It carries out the reaction ATP + H2O + 4 H(+)(in) = ADP + phosphate + 5 H(+)(out). In terms of biological role, produces ATP from ADP in the presence of a proton gradient across the membrane. The alpha chain is a regulatory subunit. This is ATP synthase subunit alpha 2 from Listeria welshimeri serovar 6b (strain ATCC 35897 / DSM 20650 / CCUG 15529 / CIP 8149 / NCTC 11857 / SLCC 5334 / V8).